The sequence spans 440 residues: Transposon Ty1-GR1 Gag polyprotein (440 aa).

A compositionally biased stretch (low complexity) spans M1 to S16. Disordered stretches follow at residues M1 to Q93, P126 to P173, and G352 to Y440. 3 stretches are compositionally biased toward polar residues: residues T48–S60, S71–Q93, and Q127–F152. The span at T153–T165 shows a compositional bias: low complexity. Residues N299–H401 form an RNA-binding region. The segment covering N402 to S418 has biased composition (low complexity). The residue at position 416 (S416) is a Phosphoserine. Over residues K419–N428 the composition is skewed to polar residues. Positions N429–Y440 are enriched in basic and acidic residues.

Homotrimer.

The protein localises to the cytoplasm. Functionally, capsid protein (CA) is the structural component of the virus-like particle (VLP), forming the shell that encapsulates the retrotransposons dimeric RNA genome. The particles are assembled from trimer-clustered units and there are holes in the capsid shells that allow for the diffusion of macromolecules. CA also has nucleocapsid-like chaperone activity, promoting primer tRNA(i)-Met annealing to the multipartite primer-binding site (PBS), dimerization of Ty1 RNA and initiation of reverse transcription. The polypeptide is Transposon Ty1-GR1 Gag polyprotein (TY1A-GR1) (Saccharomyces cerevisiae (strain ATCC 204508 / S288c) (Baker's yeast)).